The primary structure comprises 595 residues: Aspartate--tRNA(Asp/Asn) ligase (595 aa).

Glutamate 175 is a binding site for L-aspartate. The interval 199-202 (QQYK) is aspartate. The L-aspartate site is built by arginine 221 and histidine 454. 221–223 (RDE) serves as a coordination point for ATP. Residue glutamate 488 coordinates ATP. Arginine 495 serves as a coordination point for L-aspartate. 540-543 (GIDR) contributes to the ATP binding site.

The protein belongs to the class-II aminoacyl-tRNA synthetase family. Type 1 subfamily. In terms of assembly, homodimer.

The protein localises to the cytoplasm. The enzyme catalyses tRNA(Asx) + L-aspartate + ATP = L-aspartyl-tRNA(Asx) + AMP + diphosphate. Functionally, aspartyl-tRNA synthetase with relaxed tRNA specificity since it is able to aspartylate not only its cognate tRNA(Asp) but also tRNA(Asn). Reaction proceeds in two steps: L-aspartate is first activated by ATP to form Asp-AMP and then transferred to the acceptor end of tRNA(Asp/Asn). The chain is Aspartate--tRNA(Asp/Asn) ligase from Brucella canis (strain ATCC 23365 / NCTC 10854 / RM-666).